The sequence spans 676 residues: Zinc finger protein 418 (676 aa).

The KRAB domain maps to 5-91 (VAFEDVAVNF…HSCEMCGAIL (87 aa)). 16 C2H2-type zinc fingers span residues 82–105 (HSCE…GTHH), 230–252 (CYCW…QRVH), 258–280 (YECG…QRVH), 286–308 (YECG…QRVH), 314–336 (YECG…QRVH), 342–364 (YECE…QRGH), 370–392 (YECE…HRVH), 398–420 (YECG…QRGH), 426–448 (YECG…QRSH), 454–476 (YECR…QRVH), 482–504 (YECN…QRVH), 510–532 (FECS…RRVH), 538–560 (YECG…QKTH), 591–613 (YECR…QRLH), 619–641 (YECS…RRVH), and 647–669 (YECS…QRVH).

This sequence belongs to the krueppel C2H2-type zinc-finger protein family. Highly expressed in heart.

It localises to the nucleus. Functionally, transcriptional repressor. May play a role as regulator of the ubiquitin-proteasome system and autophagy-lysosomal pathway. This is Zinc finger protein 418 (ZNF418) from Homo sapiens (Human).